We begin with the raw amino-acid sequence, 238 residues long: Uridylate kinase (238 aa).

10–13 (KFSG) lines the ATP pocket. Positions 18 to 23 (GDSGFG) are involved in allosteric activation by GTP. Glycine 52 is a UMP binding site. Residues glycine 53 and arginine 57 each contribute to the ATP site. Residues aspartate 73 and 134 to 141 (TGNPFFTT) each bind UMP. Residues threonine 161, tyrosine 167, and aspartate 170 each coordinate ATP.

This sequence belongs to the UMP kinase family. As to quaternary structure, homohexamer.

Its subcellular location is the cytoplasm. It carries out the reaction UMP + ATP = UDP + ADP. It participates in pyrimidine metabolism; CTP biosynthesis via de novo pathway; UDP from UMP (UMPK route): step 1/1. Its activity is regulated as follows. Allosterically activated by GTP. Inhibited by UTP. Catalyzes the reversible phosphorylation of UMP to UDP. In Campylobacter curvus (strain 525.92), this protein is Uridylate kinase.